Reading from the N-terminus, the 337-residue chain is Interferon gamma receptor 2 (337 aa).

The first 21 residues, 1-21 (MRPTLLWSLLLLLGVFAAAAA), serve as a signal peptide directing secretion. The Extracellular portion of the chain corresponds to 28-247 (SQLPAPQHPK…MADASTELQQ (220 aa)). Residues 31-129 (PAPQHPKIRL…GALHSAWVTM (99 aa)) form the Fibronectin type-III 1 domain. 2 N-linked (GlcNAc...) asparagine glycosylation sites follow: Asn-56 and Asn-85. Cysteines 86 and 94 form a disulfide. Asn-110, Asn-137, Asn-219, and Asn-231 each carry an N-linked (GlcNAc...) asparagine glycan. The 99-residue stretch at 142–240 (PPENIEVTPG…NISCYETMAD (99 aa)) folds into the Fibronectin type-III 2 domain. Cys-209 and Cys-234 are joined by a disulfide. Residues 248-268 (VILISVGTFSLLSVLAGACFF) traverse the membrane as a helical segment. At 269 to 337 (LVLKYRGLIK…KEQEDVLQTL (69 aa)) the chain is on the cytoplasmic side. The short motif at 276 to 277 (LI) is the Dileucine internalization motif element.

The protein belongs to the type II cytokine receptor family. In terms of assembly, heterodimer with IFNGR1, to form the IFNG receptor complex. Interacts (via intracellular domain) with JAK2. Expressed in T-cells (at protein level).

The protein localises to the cell membrane. Its subcellular location is the cytoplasmic vesicle membrane. It is found in the golgi apparatus membrane. The protein resides in the endoplasmic reticulum membrane. It localises to the cytoplasm. In terms of biological role, associates with IFNGR1 to form a receptor for the cytokine interferon gamma (IFNG). Ligand binding stimulates activation of the JAK/STAT signaling pathway. Required for signal transduction in contrast to other receptor subunit responsible for ligand binding. This is Interferon gamma receptor 2 from Homo sapiens (Human).